Reading from the N-terminus, the 78-residue chain is Omega-conotoxin-like ArMKLT1-011 (78 aa).

An N-terminal signal peptide occupies residues Met-1–Ala-22. The propeptide occupies Val-23–Asp-48. 3 disulfides stabilise this stretch: Cys-52/Cys-69, Cys-59/Cys-73, and Cys-68/Cys-77.

Belongs to the conotoxin O1 superfamily. As to expression, expressed by the venom duct.

Its subcellular location is the secreted. Omega-conotoxins act at presynaptic membranes, they bind and block voltage-gated calcium channels (Cav). The chain is Omega-conotoxin-like ArMKLT1-011 from Conus arenatus (Sand-dusted cone).